A 58-amino-acid polypeptide reads, in one-letter code: Large ribosomal subunit protein uL30 (58 aa).

This sequence belongs to the universal ribosomal protein uL30 family. As to quaternary structure, part of the 50S ribosomal subunit.

The chain is Large ribosomal subunit protein uL30 from Trichlorobacter lovleyi (strain ATCC BAA-1151 / DSM 17278 / SZ) (Geobacter lovleyi).